The sequence spans 568 residues: Proline--tRNA ligase (568 aa).

Belongs to the class-II aminoacyl-tRNA synthetase family. ProS type 1 subfamily. In terms of assembly, homodimer.

The protein resides in the cytoplasm. The catalysed reaction is tRNA(Pro) + L-proline + ATP = L-prolyl-tRNA(Pro) + AMP + diphosphate. Functionally, catalyzes the attachment of proline to tRNA(Pro) in a two-step reaction: proline is first activated by ATP to form Pro-AMP and then transferred to the acceptor end of tRNA(Pro). As ProRS can inadvertently accommodate and process non-cognate amino acids such as alanine and cysteine, to avoid such errors it has two additional distinct editing activities against alanine. One activity is designated as 'pretransfer' editing and involves the tRNA(Pro)-independent hydrolysis of activated Ala-AMP. The other activity is designated 'posttransfer' editing and involves deacylation of mischarged Ala-tRNA(Pro). The misacylated Cys-tRNA(Pro) is not edited by ProRS. This chain is Proline--tRNA ligase, found in Chlamydia pneumoniae (Chlamydophila pneumoniae).